We begin with the raw amino-acid sequence, 294 residues long: 4-hydroxy-tetrahydrodipicolinate synthase (294 aa).

Residue Thr45 coordinates pyruvate. Tyr133 acts as the Proton donor/acceptor in catalysis. Lys162 functions as the Schiff-base intermediate with substrate in the catalytic mechanism. Ile204 contributes to the pyruvate binding site.

This sequence belongs to the DapA family. As to quaternary structure, homotetramer; dimer of dimers.

It is found in the cytoplasm. The catalysed reaction is L-aspartate 4-semialdehyde + pyruvate = (2S,4S)-4-hydroxy-2,3,4,5-tetrahydrodipicolinate + H2O + H(+). Its pathway is amino-acid biosynthesis; L-lysine biosynthesis via DAP pathway; (S)-tetrahydrodipicolinate from L-aspartate: step 3/4. Functionally, catalyzes the condensation of (S)-aspartate-beta-semialdehyde [(S)-ASA] and pyruvate to 4-hydroxy-tetrahydrodipicolinate (HTPA). The protein is 4-hydroxy-tetrahydrodipicolinate synthase of Bartonella quintana (strain Toulouse) (Rochalimaea quintana).